Consider the following 469-residue polypeptide: Tubulin gamma-2 chain (469 aa).

142 to 148 (AGGTGSG) contacts GTP.

It belongs to the tubulin family.

It localises to the cytoplasm. It is found in the cytoskeleton. The protein resides in the microtubule organizing center. Its function is as follows. Tubulin is the major constituent of microtubules. The gamma chain is found at microtubule organizing centers (MTOC) such as the spindle poles, suggesting that it is involved in the minus-end nucleation of microtubule assembly. In Zea mays (Maize), this protein is Tubulin gamma-2 chain (TUBG2).